Here is a 510-residue protein sequence, read N- to C-terminus: NADH-quinone oxidoreductase subunit N (510 aa).

Transmembrane regions (helical) follow at residues L14–A34, V42–M62, A84–L104, G113–A133, L135–L155, V170–L190, M208–F228, P247–F267, F286–G306, S323–F343, V346–V366, A390–F410, W426–I446, and I466–L486.

It belongs to the complex I subunit 2 family. As to quaternary structure, NDH-1 is composed of 14 different subunits. Subunits NuoA, H, J, K, L, M, N constitute the membrane sector of the complex.

It is found in the cell membrane. It carries out the reaction a quinone + NADH + 5 H(+)(in) = a quinol + NAD(+) + 4 H(+)(out). Functionally, NDH-1 shuttles electrons from NADH, via FMN and iron-sulfur (Fe-S) centers, to quinones in the respiratory chain. The immediate electron acceptor for the enzyme in this species is believed to be a menaquinone. Couples the redox reaction to proton translocation (for every two electrons transferred, four hydrogen ions are translocated across the cytoplasmic membrane), and thus conserves the redox energy in a proton gradient. This Brevibacillus brevis (strain 47 / JCM 6285 / NBRC 100599) protein is NADH-quinone oxidoreductase subunit N.